Here is a 274-residue protein sequence, read N- to C-terminus: Ribosomal RNA small subunit methyltransferase A (274 aa).

Residues Asn27, Leu29, Gly54, Glu75, Asp100, and Asn121 each coordinate S-adenosyl-L-methionine.

Belongs to the class I-like SAM-binding methyltransferase superfamily. rRNA adenine N(6)-methyltransferase family. RsmA subfamily.

It is found in the cytoplasm. It catalyses the reaction adenosine(1518)/adenosine(1519) in 16S rRNA + 4 S-adenosyl-L-methionine = N(6)-dimethyladenosine(1518)/N(6)-dimethyladenosine(1519) in 16S rRNA + 4 S-adenosyl-L-homocysteine + 4 H(+). Its function is as follows. Specifically dimethylates two adjacent adenosines (A1518 and A1519) in the loop of a conserved hairpin near the 3'-end of 16S rRNA in the 30S particle. May play a critical role in biogenesis of 30S subunits. This chain is Ribosomal RNA small subunit methyltransferase A, found in Acinetobacter baylyi (strain ATCC 33305 / BD413 / ADP1).